A 752-amino-acid chain; its full sequence is uncharacterized protein (752 aa).

Residues serine 202 and serine 582 each carry the phosphoserine modification. Residues 596-752 are disordered; it reads EEEKESVEVE…KTGEDGEIVL (157 aa). Basic and acidic residues-rich tracts occupy residues 601-613 and 641-677; these read SVEV…KNDL and LKSE…HFEV. Over residues 695–718 the composition is skewed to polar residues; sequence NNVAETILEVTSSPKSSENSQKQS. Phosphoserine occurs at positions 707 and 738.

This is an uncharacterized protein from Schizosaccharomyces pombe (strain 972 / ATCC 24843) (Fission yeast).